Reading from the N-terminus, the 250-residue chain is LexA repressor (250 aa).

Over residues 1-21 (MTSQERGTRRGDTRGNVRDFP) the composition is skewed to basic and acidic residues. The segment at 1-33 (MTSQERGTRRGDTRGNVRDFPDSPADASGLTQR) is disordered. A DNA-binding region (H-T-H motif) is located at residues 54-74 (VREIGEAVGLTSTSSVAHQLK). Active-site for autocatalytic cleavage activity residues include Ser174 and Lys211.

The protein belongs to the peptidase S24 family. In terms of assembly, homodimer.

It carries out the reaction Hydrolysis of Ala-|-Gly bond in repressor LexA.. In terms of biological role, represses a number of genes involved in the response to DNA damage (SOS response), including recA and lexA. In the presence of single-stranded DNA, RecA interacts with LexA causing an autocatalytic cleavage which disrupts the DNA-binding part of LexA, leading to derepression of the SOS regulon and eventually DNA repair. This Parafrankia sp. (strain EAN1pec) protein is LexA repressor.